The following is a 333-amino-acid chain: Adenosine deaminase (333 aa).

Positions 12 and 14 each coordinate Zn(2+). Substrate-binding residues include histidine 14, aspartate 16, and glycine 170. Position 197 (histidine 197) interacts with Zn(2+). Residue glutamate 200 is the Proton donor of the active site. A Zn(2+)-binding site is contributed by aspartate 278. Residue aspartate 279 coordinates substrate.

It belongs to the metallo-dependent hydrolases superfamily. Adenosine and AMP deaminases family. Adenosine deaminase subfamily. Zn(2+) serves as cofactor.

It catalyses the reaction adenosine + H2O + H(+) = inosine + NH4(+). It carries out the reaction 2'-deoxyadenosine + H2O + H(+) = 2'-deoxyinosine + NH4(+). Catalyzes the hydrolytic deamination of adenosine and 2-deoxyadenosine. This is Adenosine deaminase from Shigella boydii serotype 4 (strain Sb227).